The following is a 66-amino-acid chain: Large ribosomal subunit protein bL31 (66 aa).

4 residues coordinate Zn(2+): Cys-16, Cys-18, Cys-36, and Cys-39.

This sequence belongs to the bacterial ribosomal protein bL31 family. Type A subfamily. Part of the 50S ribosomal subunit. Zn(2+) serves as cofactor.

Functionally, binds the 23S rRNA. In Campylobacter lari (strain RM2100 / D67 / ATCC BAA-1060), this protein is Large ribosomal subunit protein bL31.